Here is a 456-residue protein sequence, read N- to C-terminus: Bifunctional protein GlmU (456 aa).

Residues 1–228 (MPQNTLNTVI…SHLAAGVNNK (228 aa)) form a pyrophosphorylase region. UDP-N-acetyl-alpha-D-glucosamine-binding positions include 11–14 (LAAG), Lys25, Gln75, 80–81 (GT), 102–104 (YGD), Gly138, Glu153, Asn168, and Asn226. Asp104 lines the Mg(2+) pocket. Position 226 (Asn226) interacts with Mg(2+). The tract at residues 229 to 249 (RQLAELERIFQTEQAQELLKA) is linker. The segment at 250 to 456 (GVTLRDPARF…GWMRPEKDKQ (207 aa)) is N-acetyltransferase. UDP-N-acetyl-alpha-D-glucosamine-binding residues include Arg332 and Lys350. His362 functions as the Proton acceptor in the catalytic mechanism. Residues Tyr365 and Asn376 each coordinate UDP-N-acetyl-alpha-D-glucosamine. Acetyl-CoA is bound by residues Ala379, 385–386 (NY), Ser404, Ala422, and Arg439.

This sequence in the N-terminal section; belongs to the N-acetylglucosamine-1-phosphate uridyltransferase family. In the C-terminal section; belongs to the transferase hexapeptide repeat family. As to quaternary structure, homotrimer. It depends on Mg(2+) as a cofactor.

It is found in the cytoplasm. It catalyses the reaction alpha-D-glucosamine 1-phosphate + acetyl-CoA = N-acetyl-alpha-D-glucosamine 1-phosphate + CoA + H(+). The enzyme catalyses N-acetyl-alpha-D-glucosamine 1-phosphate + UTP + H(+) = UDP-N-acetyl-alpha-D-glucosamine + diphosphate. The protein operates within nucleotide-sugar biosynthesis; UDP-N-acetyl-alpha-D-glucosamine biosynthesis; N-acetyl-alpha-D-glucosamine 1-phosphate from alpha-D-glucosamine 6-phosphate (route II): step 2/2. It participates in nucleotide-sugar biosynthesis; UDP-N-acetyl-alpha-D-glucosamine biosynthesis; UDP-N-acetyl-alpha-D-glucosamine from N-acetyl-alpha-D-glucosamine 1-phosphate: step 1/1. Its pathway is bacterial outer membrane biogenesis; LPS lipid A biosynthesis. In terms of biological role, catalyzes the last two sequential reactions in the de novo biosynthetic pathway for UDP-N-acetylglucosamine (UDP-GlcNAc). The C-terminal domain catalyzes the transfer of acetyl group from acetyl coenzyme A to glucosamine-1-phosphate (GlcN-1-P) to produce N-acetylglucosamine-1-phosphate (GlcNAc-1-P), which is converted into UDP-GlcNAc by the transfer of uridine 5-monophosphate (from uridine 5-triphosphate), a reaction catalyzed by the N-terminal domain. The chain is Bifunctional protein GlmU from Neisseria gonorrhoeae (strain ATCC 700825 / FA 1090).